A 106-amino-acid polypeptide reads, in one-letter code: Urease subunit beta (106 aa).

This sequence belongs to the urease beta subunit family. Heterotrimer of UreA (gamma), UreB (beta) and UreC (alpha) subunits. Three heterotrimers associate to form the active enzyme.

The protein resides in the cytoplasm. The catalysed reaction is urea + 2 H2O + H(+) = hydrogencarbonate + 2 NH4(+). Its pathway is nitrogen metabolism; urea degradation; CO(2) and NH(3) from urea (urease route): step 1/1. This Acinetobacter baumannii (strain ATCC 17978 / DSM 105126 / CIP 53.77 / LMG 1025 / NCDC KC755 / 5377) protein is Urease subunit beta.